The sequence spans 122 residues: Chorismate mutase AroH (122 aa).

The Chorismate mutase aroH-type domain maps to 2–120 (VRGIRGAITV…AVRLRPDLES (119 aa)). Prephenate is bound by residues arginine 6, arginine 89, and tyrosine 107.

In terms of assembly, homotrimer.

It localises to the cytoplasm. The enzyme catalyses chorismate = prephenate. It participates in metabolic intermediate biosynthesis; prephenate biosynthesis; prephenate from chorismate: step 1/1. Its activity is regulated as follows. Inhibited by 40% with 500 uM tyrosine, and a tyrosine concentration as high as 5 mM reduced activity to 5%. Functionally, catalyzes the Claisen rearrangement of chorismate to prephenate. Probably involved in the aromatic amino acid biosynthesis. This Thermus thermophilus protein is Chorismate mutase AroH.